We begin with the raw amino-acid sequence, 88 residues long: MAASPVLAVDNSSVAADQLKSIIERIERLEEEKAGLAGDIKDVYAEAKANGFDTKVLRKIISIRKRDHEERQEEEAILELYMQALGMV.

It belongs to the UPF0335 family.

This Methylobacterium sp. (strain 4-46) protein is UPF0335 protein M446_5200.